The following is a 350-amino-acid chain: Small ribosomal subunit biogenesis GTPase RsgA (350 aa).

Over residues 1 to 17 the composition is skewed to polar residues; the sequence is MSKNKLSKGQQRRVNAN. Residues 1–33 are disordered; that stretch reads MSKNKLSKGQQRRVNANHQRRLKTSKEKPDYDD. The 170-residue stretch at 104–273 folds into the CP-type G domain; that stretch reads TSVLTRPDFY…VIDSPGVREF (170 aa). GTP contacts are provided by residues 160–163 and 214–222; these read NKID and GQSGVGKSS. Zn(2+) is bound by residues Cys-297, Cys-302, His-304, and Cys-310.

It belongs to the TRAFAC class YlqF/YawG GTPase family. RsgA subfamily. In terms of assembly, monomer. Associates with 30S ribosomal subunit, binds 16S rRNA. Zn(2+) is required as a cofactor.

The protein localises to the cytoplasm. Its function is as follows. One of several proteins that assist in the late maturation steps of the functional core of the 30S ribosomal subunit. Helps release RbfA from mature subunits. May play a role in the assembly of ribosomal proteins into the subunit. Circularly permuted GTPase that catalyzes slow GTP hydrolysis, GTPase activity is stimulated by the 30S ribosomal subunit. This Escherichia coli (strain SMS-3-5 / SECEC) protein is Small ribosomal subunit biogenesis GTPase RsgA.